The following is a 236-amino-acid chain: Orotidine 5'-phosphate decarboxylase (236 aa).

Substrate-binding positions include Asp17, Lys39, 66–75, Thr125, Arg186, Gln195, Gly215, and Arg216; that span reads DLKFHDIPNT. Residue Lys68 is the Proton donor of the active site.

It belongs to the OMP decarboxylase family. Type 1 subfamily. In terms of assembly, homodimer.

It catalyses the reaction orotidine 5'-phosphate + H(+) = UMP + CO2. It participates in pyrimidine metabolism; UMP biosynthesis via de novo pathway; UMP from orotate: step 2/2. Functionally, catalyzes the decarboxylation of orotidine 5'-monophosphate (OMP) to uridine 5'-monophosphate (UMP). The polypeptide is Orotidine 5'-phosphate decarboxylase (Buchnera aphidicola subsp. Acyrthosiphon pisum (strain 5A)).